Reading from the N-terminus, the 324-residue chain is Beta-ketoacyl-[acyl-carrier-protein] synthase III (324 aa).

Residues Cys114 and His251 contribute to the active site. The ACP-binding stretch occupies residues 252–256 (QANLR). The active site involves Asn281.

This sequence belongs to the thiolase-like superfamily. FabH family. Homodimer.

The protein resides in the cytoplasm. It carries out the reaction malonyl-[ACP] + acetyl-CoA + H(+) = 3-oxobutanoyl-[ACP] + CO2 + CoA. It participates in lipid metabolism; fatty acid biosynthesis. Its function is as follows. Catalyzes the condensation reaction of fatty acid synthesis by the addition to an acyl acceptor of two carbons from malonyl-ACP. Catalyzes the first condensation reaction which initiates fatty acid synthesis and may therefore play a role in governing the total rate of fatty acid production. Possesses both acetoacetyl-ACP synthase and acetyl transacylase activities. Its substrate specificity determines the biosynthesis of branched-chain and/or straight-chain of fatty acids. The polypeptide is Beta-ketoacyl-[acyl-carrier-protein] synthase III (Rhodobacter capsulatus (Rhodopseudomonas capsulata)).